A 283-amino-acid polypeptide reads, in one-letter code: Phosphatidylglycerol--prolipoprotein diacylglyceryl transferase (283 aa).

4 helical membrane passes run 17–37 (LAVR…TFLG), 56–76 (FLTW…VLFY), 92–112 (WEGG…IWLF), and 117–137 (GIGF…GLAS). Arg139 is an a 1,2-diacyl-sn-glycero-3-phospho-(1'-sn-glycerol) binding site. The next 3 membrane-spanning stretches (helical) occupy residues 194-214 (PSQL…VWLF), 222-242 (GQVA…AEFA), and 255-275 (GLSM…VGFV).

Belongs to the Lgt family.

The protein resides in the cell inner membrane. The enzyme catalyses L-cysteinyl-[prolipoprotein] + a 1,2-diacyl-sn-glycero-3-phospho-(1'-sn-glycerol) = an S-1,2-diacyl-sn-glyceryl-L-cysteinyl-[prolipoprotein] + sn-glycerol 1-phosphate + H(+). Its pathway is protein modification; lipoprotein biosynthesis (diacylglyceryl transfer). Its function is as follows. Catalyzes the transfer of the diacylglyceryl group from phosphatidylglycerol to the sulfhydryl group of the N-terminal cysteine of a prolipoprotein, the first step in the formation of mature lipoproteins. This chain is Phosphatidylglycerol--prolipoprotein diacylglyceryl transferase, found in Neisseria meningitidis serogroup C / serotype 2a (strain ATCC 700532 / DSM 15464 / FAM18).